A 122-amino-acid chain; its full sequence is Large ribosomal subunit protein uL14 (122 aa).

This sequence belongs to the universal ribosomal protein uL14 family. As to quaternary structure, part of the 50S ribosomal subunit. Forms a cluster with proteins L3 and L19. In the 70S ribosome, L14 and L19 interact and together make contacts with the 16S rRNA in bridges B5 and B8.

Its function is as follows. Binds to 23S rRNA. Forms part of two intersubunit bridges in the 70S ribosome. The polypeptide is Large ribosomal subunit protein uL14 (Thermotoga petrophila (strain ATCC BAA-488 / DSM 13995 / JCM 10881 / RKU-1)).